A 72-amino-acid chain; its full sequence is Metallothionein-like protein 1B (72 aa).

Belongs to the metallothionein superfamily. Type 15 family. As to expression, expressed in leaves of mature plants.

Functionally, metallothioneins have a high content of cysteine residues that bind various heavy metals. Functions as a metal chelator of nickel (Ni), cadmium (Cd), zinc (Zn) and copper (Cu). Possesses higher affinity for Ni and Cd ions compared to Zn and Cu ions. The chain is Metallothionein-like protein 1B (MT1B) from Oryza sativa subsp. japonica (Rice).